Consider the following 289-residue polypeptide: Phenylalanine-4-hydroxylase (289 aa).

The Fe cation site is built by His-144, His-149, and Glu-189.

This sequence belongs to the biopterin-dependent aromatic amino acid hydroxylase family. Fe(2+) serves as cofactor.

It carries out the reaction (6R)-L-erythro-5,6,7,8-tetrahydrobiopterin + L-phenylalanine + O2 = (4aS,6R)-4a-hydroxy-L-erythro-5,6,7,8-tetrahydrobiopterin + L-tyrosine. It participates in amino-acid degradation; L-phenylalanine degradation; acetoacetate and fumarate from L-phenylalanine: step 1/6. This is Phenylalanine-4-hydroxylase (phhA) from Vibrio cholerae serotype O1 (strain ATCC 39315 / El Tor Inaba N16961).